The primary structure comprises 89 residues: Small ribosomal subunit protein uS15 (89 aa).

Belongs to the universal ribosomal protein uS15 family. Part of the 30S ribosomal subunit. Forms a bridge to the 50S subunit in the 70S ribosome, contacting the 23S rRNA.

One of the primary rRNA binding proteins, it binds directly to 16S rRNA where it helps nucleate assembly of the platform of the 30S subunit by binding and bridging several RNA helices of the 16S rRNA. Its function is as follows. Forms an intersubunit bridge (bridge B4) with the 23S rRNA of the 50S subunit in the ribosome. This chain is Small ribosomal subunit protein uS15, found in Thermomicrobium roseum (strain ATCC 27502 / DSM 5159 / P-2).